The sequence spans 776 residues: G protein-regulated inducer of neurite outgrowth 3 (776 aa).

Disordered stretches follow at residues 1–37 (MGTVPDPLRSAKTSLIAASGKEDDLGEPQAASPRHRP) and 68–312 (VCEH…IKEV). Positions 101–118 (QLPGSSQPAASAPSSAAG) are enriched in low complexity. Composition is skewed to polar residues over residues 129–161 (PANQHTCQSIPGDQPNAITSSMPEDSLMRSQRT) and 193–203 (ETIQGTVQTPV). Residues 208–217 (VVSHSSSPVG) show a composition bias toward low complexity. Over residues 242 to 274 (SGCSENKQPSVTASGPQGTTSVTPQPTPLTSEP) the composition is skewed to polar residues. 2 positions are modified to phosphoserine: Ser332 and Ser365. Disordered stretches follow at residues 518–637 (ISKA…RPSR) and 723–748 (LIKTQNSQTRRSISSDTSSNKKLRGR). The segment covering 520-552 (KADHSGSLDPTNKGDAREKKPASPQVVKEKEST) has biased composition (basic and acidic residues). Residues 566-580 (PKSQESGGTESAANP) are compositionally biased toward polar residues. Low complexity predominate over residues 604 to 620 (SLSLPSDPMGDSSPGSG). Residues 725–742 (KTQNSQTRRSISSDTSSN) show a composition bias toward polar residues.

Functionally, may be involved in neurite outgrowth. The sequence is that of G protein-regulated inducer of neurite outgrowth 3 (GPRIN3) from Homo sapiens (Human).